We begin with the raw amino-acid sequence, 47 residues long: Lysis protein for colicin E7 (47 aa).

An N-terminal signal peptide occupies residues 1–19 (MKKITGIILLLLAAIILAA). Cys20 is lipidated: N-palmitoyl cysteine. The S-diacylglycerol cysteine moiety is linked to residue Cys20.

It localises to the cell outer membrane. Functionally, lysis proteins are required for both colicin release and partial cell lysis. The protein is Lysis protein for colicin E7 (lys) of Escherichia coli.